The sequence spans 311 residues: 4-hydroxy-tetrahydrodipicolinate synthase (311 aa).

Residue T49 coordinates pyruvate. Catalysis depends on Y138, which acts as the Proton donor/acceptor. K166 acts as the Schiff-base intermediate with substrate in catalysis. V207 contributes to the pyruvate binding site.

This sequence belongs to the DapA family. As to quaternary structure, homotetramer; dimer of dimers.

The protein localises to the cytoplasm. The enzyme catalyses L-aspartate 4-semialdehyde + pyruvate = (2S,4S)-4-hydroxy-2,3,4,5-tetrahydrodipicolinate + H2O + H(+). It functions in the pathway amino-acid biosynthesis; L-lysine biosynthesis via DAP pathway; (S)-tetrahydrodipicolinate from L-aspartate: step 3/4. Its function is as follows. Catalyzes the condensation of (S)-aspartate-beta-semialdehyde [(S)-ASA] and pyruvate to 4-hydroxy-tetrahydrodipicolinate (HTPA). The chain is 4-hydroxy-tetrahydrodipicolinate synthase from Lactobacillus helveticus (strain DPC 4571).